A 1035-amino-acid chain; its full sequence is Potassium-transporting ATPase alpha chain 1 (1035 aa).

Positions 1–41 (MGKADNYELYSVELGPGPGGDMAAKMSKKKKAGGGGGKRKE) are disordered. Residues 1–98 (MGKADNYELY…NALRPPRGTP (98 aa)) lie on the Cytoplasmic side of the membrane. A phosphotyrosine mark is found at Y7 and Y10. The span at 26–40 (MSKKKKAGGGGGKRK) shows a compositional bias: basic residues. A Phosphoserine modification is found at S27. A helical membrane pass occupies residues 99-119 (EYVKFARQLAGGLQCLMWVAA). Residues 120–142 (AICLIAFAIQASEGDLTTDDNLY) are Lumenal-facing. A helical transmembrane segment spans residues 143-163 (LALALIAVVVVTGCFGYYQEF). Over 164 to 299 (KSTNIIASFK…NEKTPIAIEI (136 aa)) the chain is Cytoplasmic. The chain crosses the membrane as a helical span at residues 300–319 (EHFVDIIAGLAILFGATFFV). Residues 320–331 (VAMCIGYTFLRA) lie on the Lumenal side of the membrane. The chain crosses the membrane as a helical span at residues 332 to 349 (MVFFMAIVVAYVPEGLLA). Residues V340, A341, V343, and E345 each coordinate K(+). Residues 350-783 (TVTVCLSLTA…EQGRLIFDNL (434 aa)) are Cytoplasmic-facing. The 4-aspartylphosphate intermediate role is filled by D387. 2 residues coordinate Mg(2+): D387 and T389. Residues S463 and S601 each carry the phosphoserine modification. Positions 728 and 732 each coordinate Mg(2+). A helical transmembrane segment spans residues 784–803 (KKSIAYTLTKNIPELTPYLI). E797 provides a ligand contact to K(+). Topologically, residues 804-813 (YITVSVPLPL) are lumenal. A helical transmembrane segment spans residues 814–834 (GCITILFIELCTDIFPSVSLA). A K(+)-binding site is contributed by E822. At 835 to 854 (YEKAESDIMHLRPRNPKRDR) the chain is on the cytoplasmic side. Residue S840 is modified to Phosphoserine. The helical transmembrane segment at 855-877 (LVNEPLAAYSYFQIGAIQSFAGF) threads the bilayer. The Lumenal segment spans residues 878-929 (TDYFTAMAQEGWFPLLCVGLRPQWEDHHLQDLQDSYGQEWTFGQRLYQQYTC). The chain crosses the membrane as a helical span at residues 930 to 949 (YTVFFISIEMCQIADVLIRK). The Cytoplasmic portion of the chain corresponds to 950–963 (TRRLSAFQQGFFRN). Phosphoserine; by PKA is present on S954. Residues 964 to 982 (RILVIAIVFQVCIGCFLCY) form a helical membrane-spanning segment. Topologically, residues 983–997 (CPGMPNIFNFMPIRF) are lumenal. Residues 998–1018 (QWWLVPMPFGLLIFVYDEIRK) traverse the membrane as a helical segment. Topologically, residues 1019–1035 (LGVRCCPGSWWDQELYY) are cytoplasmic.

This sequence belongs to the cation transport ATPase (P-type) (TC 3.A.3) family. Type IIC subfamily. The gastric H(+)/K(+) ATPase pump is composed of the catalytic alpha subunit ATP4A and the regulatory beta subunit ATP4B. Interacts (via the P-domain) with ATP4B (via N-terminus); this interaction stabilizes the lumenal-open E2 conformation state and prevents the reverse reaction of the transport cycle.

The protein localises to the apical cell membrane. It localises to the cell membrane. It carries out the reaction K(+)(out) + ATP + H2O + H(+)(in) = K(+)(in) + ADP + phosphate + 2 H(+)(out). Functionally, the catalytic subunit of the gastric H(+)/K(+) ATPase pump which transports H(+) ions in exchange for K(+) ions across the apical membrane of parietal cells. Uses ATP as an energy source to pump H(+) ions to the gastric lumen while transporting K(+) ion from the lumen into the cell. Remarkably generates a million-fold proton gradient across the gastric parietal cell membrane, acidifying the gastric juice down to pH 1. Within a transport cycle, the transfer of a H(+) ion across the membrane is coupled to ATP hydrolysis and is associated with a transient phosphorylation that shifts the pump conformation from inward-facing (E1) to outward-facing state (E2). The release of the H(+) ion in the stomach lumen is followed by binding of K(+) ion converting the pump conformation back to the E1 state. In Oryctolagus cuniculus (Rabbit), this protein is Potassium-transporting ATPase alpha chain 1 (ATP4A).